A 161-amino-acid polypeptide reads, in one-letter code: Large ribosomal subunit protein uL11 (161 aa).

It belongs to the universal ribosomal protein uL11 family. Part of the ribosomal stalk of the 50S ribosomal subunit. Interacts with L10 and the large rRNA to form the base of the stalk. L10 forms an elongated spine to which L12 dimers bind in a sequential fashion forming a multimeric L10(L12)X complex.

In terms of biological role, forms part of the ribosomal stalk which helps the ribosome interact with GTP-bound translation factors. In Methanosarcina acetivorans (strain ATCC 35395 / DSM 2834 / JCM 12185 / C2A), this protein is Large ribosomal subunit protein uL11.